The following is a 418-amino-acid chain: ATP phosphoribosyltransferase regulatory subunit (418 aa).

It belongs to the class-II aminoacyl-tRNA synthetase family. HisZ subfamily. In terms of assembly, heteromultimer composed of HisG and HisZ subunits.

It is found in the cytoplasm. It participates in amino-acid biosynthesis; L-histidine biosynthesis; L-histidine from 5-phospho-alpha-D-ribose 1-diphosphate: step 1/9. Required for the first step of histidine biosynthesis. May allow the feedback regulation of ATP phosphoribosyltransferase activity by histidine. The protein is ATP phosphoribosyltransferase regulatory subunit of Halothermothrix orenii (strain H 168 / OCM 544 / DSM 9562).